The primary structure comprises 362 residues: 3-dehydroquinate synthase (362 aa).

NAD(+) contacts are provided by residues 72 to 77 (DGEQYK), 106 to 110 (GVVGD), 130 to 131 (TT), Lys-143, Lys-152, and 170 to 173 (CLKT). Zn(2+)-binding residues include Glu-185, His-248, and His-265.

It belongs to the sugar phosphate cyclases superfamily. Dehydroquinate synthase family. Co(2+) serves as cofactor. It depends on Zn(2+) as a cofactor. Requires NAD(+) as cofactor.

It localises to the cytoplasm. The enzyme catalyses 7-phospho-2-dehydro-3-deoxy-D-arabino-heptonate = 3-dehydroquinate + phosphate. It functions in the pathway metabolic intermediate biosynthesis; chorismate biosynthesis; chorismate from D-erythrose 4-phosphate and phosphoenolpyruvate: step 2/7. In terms of biological role, catalyzes the conversion of 3-deoxy-D-arabino-heptulosonate 7-phosphate (DAHP) to dehydroquinate (DHQ). This chain is 3-dehydroquinate synthase, found in Aliivibrio salmonicida (strain LFI1238) (Vibrio salmonicida (strain LFI1238)).